The chain runs to 180 residues: Anaerobic nitrite reductase GLB0 (180 aa).

Positions 23–172 (TYSKENEQLV…LAEQVKAEMH (150 aa)) constitute a Globin domain. The Homodimerization motif lies at 56–60 (EIAPG). Heme b is bound by residues S66, K80, H84, K114, T118, and H119. The short motif at 126–138 (DDQFEIVKEAILY) is the Homodimerization element.

This sequence belongs to the plant globin family. As to quaternary structure, homodimer. Heme b is required as a cofactor.

It localises to the cytoplasm. The protein resides in the nucleus. The enzyme catalyses Fe(III)-heme b-[protein] + nitric oxide + H2O = Fe(II)-heme b-[protein] + nitrite + 2 H(+). In terms of biological role, phytoglobin that reduces nitrite to nitric oxide (NO) under anoxic conditions (e.g. during flooding or in waterlogged soil). May not function as an oxygen storage or transport protein. Has an unusually high affinity for O(2) through an hexacoordinate heme iron because of a very low dissociation constant. The polypeptide is Anaerobic nitrite reductase GLB0 (Physcomitrium patens (Spreading-leaved earth moss)).